A 138-amino-acid polypeptide reads, in one-letter code: Large ribosomal subunit protein bL17 (138 aa).

This sequence belongs to the bacterial ribosomal protein bL17 family. In terms of assembly, part of the 50S ribosomal subunit. Contacts protein L32.

The sequence is that of Large ribosomal subunit protein bL17 from Phenylobacterium zucineum (strain HLK1).